A 500-amino-acid polypeptide reads, in one-letter code: Probable cytosol aminopeptidase (500 aa).

Mn(2+)-binding residues include Lys262 and Asp267. Residue Lys274 is part of the active site. The Mn(2+) site is built by Asp285, Asp344, and Glu346. Residue Arg348 is part of the active site.

The protein belongs to the peptidase M17 family. Mn(2+) is required as a cofactor.

It is found in the cytoplasm. It carries out the reaction Release of an N-terminal amino acid, Xaa-|-Yaa-, in which Xaa is preferably Leu, but may be other amino acids including Pro although not Arg or Lys, and Yaa may be Pro. Amino acid amides and methyl esters are also readily hydrolyzed, but rates on arylamides are exceedingly low.. The enzyme catalyses Release of an N-terminal amino acid, preferentially leucine, but not glutamic or aspartic acids.. In terms of biological role, presumably involved in the processing and regular turnover of intracellular proteins. Catalyzes the removal of unsubstituted N-terminal amino acids from various peptides. The polypeptide is Probable cytosol aminopeptidase (Ehrlichia ruminantium (strain Welgevonden)).